The primary structure comprises 939 residues: Isoleucine--tRNA ligase (939 aa).

The 'HIGH' region signature appears at 57-67; it reads PYANGHIHIGH. E563 is an L-isoleucyl-5'-AMP binding site. Positions 604-608 match the 'KMSKS' region motif; it reads KMSKS. K607 contacts ATP. 4 residues coordinate Zn(2+): C903, C906, C921, and C924.

This sequence belongs to the class-I aminoacyl-tRNA synthetase family. IleS type 1 subfamily. In terms of assembly, monomer. Requires Zn(2+) as cofactor.

The protein localises to the cytoplasm. It carries out the reaction tRNA(Ile) + L-isoleucine + ATP = L-isoleucyl-tRNA(Ile) + AMP + diphosphate. Functionally, catalyzes the attachment of isoleucine to tRNA(Ile). As IleRS can inadvertently accommodate and process structurally similar amino acids such as valine, to avoid such errors it has two additional distinct tRNA(Ile)-dependent editing activities. One activity is designated as 'pretransfer' editing and involves the hydrolysis of activated Val-AMP. The other activity is designated 'posttransfer' editing and involves deacylation of mischarged Val-tRNA(Ile). The sequence is that of Isoleucine--tRNA ligase from Sulfurihydrogenibium sp. (strain YO3AOP1).